The following is a 349-amino-acid chain: UDP-N-acetylenolpyruvoylglucosamine reductase (349 aa).

Residues 25–197 form the FAD-binding PCMH-type domain; the sequence is GIAARARFAA…VAVTFRLPKQ (173 aa). R173 is a catalytic residue. The active-site Proton donor is the S249. E345 is an active-site residue.

It belongs to the MurB family. FAD serves as cofactor.

The protein resides in the cytoplasm. It catalyses the reaction UDP-N-acetyl-alpha-D-muramate + NADP(+) = UDP-N-acetyl-3-O-(1-carboxyvinyl)-alpha-D-glucosamine + NADPH + H(+). It functions in the pathway cell wall biogenesis; peptidoglycan biosynthesis. Cell wall formation. The polypeptide is UDP-N-acetylenolpyruvoylglucosamine reductase (Burkholderia cenocepacia (strain HI2424)).